A 244-amino-acid chain; its full sequence is Ureidoacrylate amidohydrolase RutB (244 aa).

D38 functions as the Proton acceptor in the catalytic mechanism. Residue K147 is part of the active site. The Nucleophile role is filled by C180.

It belongs to the isochorismatase family. RutB subfamily.

The catalysed reaction is (Z)-3-ureidoacrylate + H2O + H(+) = (Z)-3-aminoacrylate + NH4(+) + CO2. It catalyses the reaction (Z)-3-ureidoacrylate + H2O = (Z)-3-aminoacrylate + carbamate + H(+). It carries out the reaction (Z)-2-methylureidoacrylate + H2O + H(+) = (Z)-2-methylaminoacrylate + NH4(+) + CO2. Hydrolyzes ureidoacrylate to form aminoacrylate and carbamate. The carbamate hydrolyzes spontaneously, thereby releasing one of the nitrogen atoms of the pyrimidine ring as ammonia and one of its carbon atoms as CO2. This chain is Ureidoacrylate amidohydrolase RutB, found in Shigella flexneri serotype X (strain 2002017).